An 86-amino-acid polypeptide reads, in one-letter code: Myosuppressin (86 aa).

The signal sequence occupies residues 1 to 18 (MAIFCNNVLAALPTQCNP). Residues 19–70 (GFLDDLPPRIRKVCVALSRIYELGSEMESYIGDKENHITGFHESIPLLDSGV) constitute a propeptide that is removed on maturation. Gln-73 carries the post-translational modification Pyrrolidone carboxylic acid. Phe-82 bears the Phenylalanine amide mark.

Its subcellular location is the secreted. Myoinhibiting neuropeptide. The sequence is that of Myosuppressin from Apis mellifera (Honeybee).